The chain runs to 725 residues: Prolyl 3-hydroxylase 1 (725 aa).

A signal peptide spans Met-1 to Ala-14. The stretch at Pro-36–Ile-69 is one TPR 1 repeat. N-linked (GlcNAc...) asparagine glycosylation is present at Asn-82. TPR repeat units follow at residues Arg-136–His-169, His-198–Ala-231, and Pro-294–Asp-327. Positions Lys-394–Glu-441 form a coiled coil. N-linked (GlcNAc...) asparagine glycosylation is found at Asn-460 and Asn-533. The Fe2OG dioxygenase domain maps to Ser-557–Leu-671. 3 residues coordinate Fe cation: His-580, Asp-582, and His-652. Arg-662 is a catalytic residue. Polar residues predominate over residues Glu-701 to Ala-715. Residues Glu-701–Leu-725 are disordered. The Prevents secretion from ER motif lies at Lys-722 to Leu-725.

Belongs to the leprecan family. As to quaternary structure, binds unfolded collagen in a complex with CYPB and CRTAP. Fe cation is required as a cofactor. Requires L-ascorbate as cofactor. In terms of tissue distribution, expressed in embryonic dermis, tendon, cartilage, liver and kidney. Expression in the kidney is restricted to the calyx. In the liver, expression is restricted to the interlobular septum.

The protein resides in the endoplasmic reticulum. The catalysed reaction is L-prolyl-[collagen] + 2-oxoglutarate + O2 = trans-3-hydroxy-L-prolyl-[collagen] + succinate + CO2. Its function is as follows. Has prolyl 3-hydroxylase activity catalyzing the post-translational formation of 3-hydroxyproline in -Xaa-Pro-Gly-sequences in collagens, especially types IV and V. May be involved in the secretoty pathway of cells. Has growth suppressive activity in fibroblasts. The sequence is that of Prolyl 3-hydroxylase 1 from Gallus gallus (Chicken).